Reading from the N-terminus, the 72-residue chain is Small proline-rich protein 2D (72 aa).

A compositionally biased stretch (low complexity) spans 1-11; that stretch reads MSYQQQQCKQP. A disordered region spans residues 1 to 20; sequence MSYQQQQCKQPCQPPPVCPT. Repeat copies occupy residues 21–29, 30–38, and 39–47. A 3 X 9 AA tandem repeats of P-K-C-P-[EQ]-P-C-P-[PS] region spans residues 21-47; it reads PKCPEPCPPPKCPEPCPSPKCPQPCPP. 2 stretches are compositionally biased toward pro residues: residues 33-47 and 56-72; these read PEPCPSPKCPQPCPP and PVTPSPPCQPKCPPKSK. The tract at residues 33–72 is disordered; it reads PEPCPSPKCPQPCPPQQCQQKYPPVTPSPPCQPKCPPKSK.

It belongs to the cornifin (SPRR) family.

It is found in the cytoplasm. Functionally, cross-linked envelope protein of keratinocytes. It is a keratinocyte protein that first appears in the cell cytosol, but ultimately becomes cross-linked to membrane proteins by transglutaminase. All that results in the formation of an insoluble envelope beneath the plasma membrane. This Homo sapiens (Human) protein is Small proline-rich protein 2D (SPRR2D).